Here is a 169-residue protein sequence, read N- to C-terminus: Shikimate kinase (169 aa).

Residue 12–17 (GCGKST) participates in ATP binding. Serine 16 provides a ligand contact to Mg(2+). Substrate-binding residues include aspartate 34, arginine 57, and glycine 79. Arginine 116 contributes to the ATP binding site. Arginine 133 contacts substrate.

Belongs to the shikimate kinase family. In terms of assembly, monomer. The cofactor is Mg(2+).

Its subcellular location is the cytoplasm. It catalyses the reaction shikimate + ATP = 3-phosphoshikimate + ADP + H(+). It functions in the pathway metabolic intermediate biosynthesis; chorismate biosynthesis; chorismate from D-erythrose 4-phosphate and phosphoenolpyruvate: step 5/7. Functionally, catalyzes the specific phosphorylation of the 3-hydroxyl group of shikimic acid using ATP as a cosubstrate. The sequence is that of Shikimate kinase from Clostridium beijerinckii (strain ATCC 51743 / NCIMB 8052) (Clostridium acetobutylicum).